Reading from the N-terminus, the 350-residue chain is Mannonate dehydratase (350 aa).

It belongs to the mannonate dehydratase family. Fe(2+) serves as cofactor. It depends on Mn(2+) as a cofactor.

The catalysed reaction is D-mannonate = 2-dehydro-3-deoxy-D-gluconate + H2O. It functions in the pathway carbohydrate metabolism; pentose and glucuronate interconversion. Its function is as follows. Catalyzes the dehydration of D-mannonate. This is Mannonate dehydratase from Clostridium perfringens (strain 13 / Type A).